Consider the following 338-residue polypeptide: MLAKITRSSFYASRAVGRLSGSIPTSPAALASNCRYIQIERKRTKSHEMALYETVEKGAKNSPSYSLYFKNKCGNVISPMHDIPLYANEEKTIYNMVVEVPRWTNAKMEISLKTPMNPIKQDIKKGKLRFVANCFPHKGYIWNYGALPQTWENPDHIEPSTGCKGDNDPIDVIEIGYRVAKRGDVLKVKVLGTIALIDEGETDWKIIAIDVNDPLASKVNDIADVDQYFPGLLRATVEWFKIYKIPDGKPENQFAFNGDAKNADFANTIIAETHKFWQNLVHQSPASGSISTTNITNRNSEHVIPKEEAEKILAEAPDGGQVEEVSDTVDTWHFIHLK.

Diphosphate is bound at residue Arg129. Mg(2+) is bound by residues Asp166, Asp171, and Asp203.

Belongs to the PPase family. As to quaternary structure, component of the NURF complex composed of Caf1-55, E(bx), Nurf-38 and Iswi. Requires Mg(2+) as cofactor.

The protein resides in the cytoplasm. It is found in the nucleus. It catalyses the reaction diphosphate + H2O = 2 phosphate + H(+). In terms of biological role, component of NURF (nucleosome remodeling factor), a complex which catalyzes ATP-dependent nucleosome sliding and facilitates transcription of chromatin. NURF is required for homeotic gene expression, proper larval blood cell development, normal male X chromosome morphology, ecdysteroid signaling and metamorphosis. Inorganic pyrophosphatase (PPase), hydrolyzes inorganic pyrophosphate to inorganic phosphate, essential for driving critical biosynthetic reactions including transcription, replication, and DNA repair. The protein is Inorganic pyrophosphatase (Nurf-38) of Drosophila melanogaster (Fruit fly).